The following is a 452-amino-acid chain: Phosphoglucosamine mutase (452 aa).

S104 functions as the Phosphoserine intermediate in the catalytic mechanism. The Mg(2+) site is built by S104, D246, D248, and D250. Position 104 is a phosphoserine (S104).

Belongs to the phosphohexose mutase family. It depends on Mg(2+) as a cofactor. Activated by phosphorylation.

It catalyses the reaction alpha-D-glucosamine 1-phosphate = D-glucosamine 6-phosphate. Functionally, catalyzes the conversion of glucosamine-6-phosphate to glucosamine-1-phosphate. This Streptomyces avermitilis (strain ATCC 31267 / DSM 46492 / JCM 5070 / NBRC 14893 / NCIMB 12804 / NRRL 8165 / MA-4680) protein is Phosphoglucosamine mutase.